The sequence spans 232 residues: Ribonuclease 3 (232 aa).

The RNase III domain maps to 6–133 (FNDIENRLGV…VIAAVYLDKG (128 aa)). Glu-46 contacts Mg(2+). The active site involves Asp-50. Mg(2+)-binding residues include Asp-119 and Glu-122. Glu-122 is an active-site residue. The region spanning 160–229 (DFKTKLQELL…AKEALKRLEK (70 aa)) is the DRBM domain.

It belongs to the ribonuclease III family. As to quaternary structure, homodimer. Mg(2+) is required as a cofactor.

Its subcellular location is the cytoplasm. The catalysed reaction is Endonucleolytic cleavage to 5'-phosphomonoester.. Functionally, digests double-stranded RNA. Involved in the processing of primary rRNA transcript to yield the immediate precursors to the large and small rRNAs (23S and 16S). Processes some mRNAs, and tRNAs when they are encoded in the rRNA operon. Processes pre-crRNA and tracrRNA of type II CRISPR loci if present in the organism. This Clostridium botulinum (strain Alaska E43 / Type E3) protein is Ribonuclease 3.